The primary structure comprises 680 residues: Harmonin-binding protein USHBP1 (680 aa).

The span at methionine 1–histidine 15 shows a compositional bias: basic residues. 2 disordered regions span residues methionine 1–proline 51 and lysine 134–glutamine 161. Residues asparagine 179 to serine 218 are a coiled coil. 2 disordered regions span residues proline 220–aspartate 247 and threonine 384–glutamate 405. Coiled-coil stretches lie at residues threonine 363 to glutamate 386 and glutamine 467 to glutamine 506. The interval phenylalanine 524 to glutamine 549 is disordered. Positions glutamine 573–alanine 662 form a coiled coil.

Belongs to the MCC family. As to quaternary structure, interacts via its C-terminus with the first PDZ domain of USH1C.

This is Harmonin-binding protein USHBP1 from Mus musculus (Mouse).